Here is an 852-residue protein sequence, read N- to C-terminus: Zinc finger protein 484 (852 aa).

The KRAB domain maps to 8-78 (VSFKDVTVDF…DGEIPSQSRP (71 aa)). Lys156 participates in a covalent cross-link: Glycyl lysine isopeptide (Lys-Gly) (interchain with G-Cter in SUMO2). Residues 223–245 (CECNQCGKPLHHKQALIQQQKIH) form a C2H2-type 1; degenerate zinc finger. A C2H2-type 2; degenerate zinc finger spans residues 279–301 (HECHECEAVFTQKSQLDGSQRVY). A C2H2-type 3; degenerate zinc finger spans residues 328–350 (YKCSDYGRAFIQKSDLFRCQRIH). The C2H2-type 4; degenerate zinc finger occupies 356 to 378 (YEYSECEKNLPQNSNLNIHKKIH). 15 consecutive C2H2-type zinc fingers follow at residues 384–406 (FECT…QKIH), 412–434 (YVCT…ERIH), 440–462 (YECS…QRIH), 468–490 (FICS…QKIH), 496–518 (YICT…QKIH), 524–546 (YKCS…QKCH), 552–574 (YECS…QRIH), 580–602 (YVCT…ERIH), 608–630 (YECS…QQIH), 636–658 (YRCA…QKIH), 664–686 (YKCS…QQSH), 692–714 (YECS…QRIH), 720–742 (YICN…RRIH), 748–770 (YECS…HRIH), and 776–798 (YICA…QKIH). Lys816 participates in a covalent cross-link: Glycyl lysine isopeptide (Lys-Gly) (interchain with G-Cter in SUMO2).

Belongs to the krueppel C2H2-type zinc-finger protein family.

It is found in the nucleus. May be involved in transcriptional regulation. The polypeptide is Zinc finger protein 484 (ZNF484) (Homo sapiens (Human)).